The chain runs to 92 residues: Small ribosomal subunit protein uS19 (92 aa).

This sequence belongs to the universal ribosomal protein uS19 family.

Its function is as follows. Protein S19 forms a complex with S13 that binds strongly to the 16S ribosomal RNA. This chain is Small ribosomal subunit protein uS19, found in Roseobacter denitrificans (strain ATCC 33942 / OCh 114) (Erythrobacter sp. (strain OCh 114)).